Reading from the N-terminus, the 496-residue chain is MDRMKKIKRQLSMTLRGGRGIDKTNGVPEQIGLDESGGGGGSDLGEAPTRIAPGELRSVRGPLSSAPEIVHEDMKMGSDGESDQASATSSDEVQSPVRVRMRNHPPRKISTEDINKRLSLPADIRLPEGYLEKLTLNSPIFDKPLSRRLRRVSLSEIGFGKLETYIKLDKLGEGTYATVYKGKSKLTDNLVALKEIRLEHEEGAPCTAIREVSLLKDLKHANIVTLHDIIHTEKSLTLVFEYLDKDLKQYLDDCGNVINMHNVKLFLFQLLRGLAYCHRQKVLHRDLKPQNLLINERGELKLADFGLARAKSIPTKTYSNEVVTLWYRPPDILLGSTDYSTQIDMWGVGCIFYEMATGRPLFPGSTVEEQLHFIFRILGTPTEETWPGILSNEEFRTYNYPKYRAEALLSHAPRLDSDGADLLTKLLQFEGRNRISAEDARKHPFFLSLGERIHKLPDTTSIFALKEVQLQKEANIRSTSMPDSGRPAFRVVDTEF.

Positions 1–95 are disordered; sequence MDRMKKIKRQ…SATSSDEVQS (95 aa). At Ser-12 the chain carries Phosphoserine; by BRSK2. A phosphoserine mark is found at Ser-36, Ser-42, Ser-64, Ser-65, Ser-78, Ser-82, and Ser-89. Residues 69–78 are compositionally biased toward basic and acidic residues; that stretch reads IVHEDMKMGS. The span at 83–93 shows a compositional bias: polar residues; that stretch reads DQASATSSDEV. Phosphoserine; by CDK5 is present on Ser-95. A phosphoserine mark is found at Ser-110, Ser-119, Ser-138, Ser-146, Ser-153, and Ser-155. The region spanning 165–446 is the Protein kinase domain; it reads YIKLDKLGEG…AEDARKHPFF (282 aa). Residues 171-179 and Lys-194 contribute to the ATP site; that span reads LGEGTYATV. Thr-175 carries the phosphothreonine modification. The Proton acceptor role is filled by Asp-286. Phosphothreonine is present on Thr-380. Phosphoserine occurs at positions 391, 478, and 480.

The protein belongs to the protein kinase superfamily. CMGC Ser/Thr protein kinase family. CDC2/CDKX subfamily. Found in a complex containing CABLES1, CDK17 and TDRD7. Interacts with BRSK2. Identified in a complex with NSF, syntaxin-1, synaptotagmin, SYN1, SYP and CDK5R1. Interacts with YWHAH, YWHAQ and YWHAZ. Interacts with CCNY; this interaction increases the CDK16 kinase activity. Interacts with CCNYL1; this interaction mutually increases the stability of CDK16 and CCNYL1 and increases the kinase activity of CDK16. Interacts with NSF. In terms of processing, phosphorylation of CDK16 is essential for the binding of CCNY, but also essential for the regulation of CDK16 kinase activity. Phosphorylation of CDK16 is essential for the binding of CCNYl1, but also essential for the regulation of CDK16 kinase activity. Ser-146 and Ser-153 are the critical sites for the binding of CCNYL1 and for modulating CDK16 kinase activity. Phosphorylation at Ser-153 inhibits kinase activity. As to expression, highly expressed in testis and brain, and detected at lower levels in heart, skeletal muscle, adipose tissue, lung, spleen and pancreas (at protein level). Ubiquitous with highest levels in testis and brain, with longer form predominant in all tissues except the testis.

The protein resides in the cytoplasm. Its subcellular location is the cytoplasmic vesicle. It localises to the secretory vesicle. It is found in the cell membrane. The protein localises to the synapse. The protein resides in the synaptosome. It catalyses the reaction L-seryl-[protein] + ATP = O-phospho-L-seryl-[protein] + ADP + H(+). The catalysed reaction is L-threonyl-[protein] + ATP = O-phospho-L-threonyl-[protein] + ADP + H(+). Protein kinase that plays a role in vesicle-mediated transport processes and exocytosis. Can phosphorylate CCNY at 'Ser-336' (in vitro). Plays a role in the regulation of insulin secretion in response to changes in blood glucose levels. Regulates GH1 release by brain neurons. Phosphorylates NSF, and thereby regulates NSF oligomerization. Required for normal spermatogenesis. Regulates neuron differentiation and dendrite development. In Mus musculus (Mouse), this protein is Cyclin-dependent kinase 16 (Cdk16).